Here is a 659-residue protein sequence, read N- to C-terminus: DNA ligase (659 aa).

Residues Asp32–Asp36, Ser81–Leu82, and Glu110 each bind NAD(+). Lys112 (N6-AMP-lysine intermediate) is an active-site residue. NAD(+) is bound by residues Arg133, Glu168, Lys284, and Lys308. Residues Cys402, Cys405, Cys420, and Cys425 each coordinate Zn(2+). In terms of domain architecture, BRCT spans Ala582–Pro659.

Belongs to the NAD-dependent DNA ligase family. LigA subfamily. The cofactor is Mg(2+). Mn(2+) is required as a cofactor.

It catalyses the reaction NAD(+) + (deoxyribonucleotide)n-3'-hydroxyl + 5'-phospho-(deoxyribonucleotide)m = (deoxyribonucleotide)n+m + AMP + beta-nicotinamide D-nucleotide.. In terms of biological role, DNA ligase that catalyzes the formation of phosphodiester linkages between 5'-phosphoryl and 3'-hydroxyl groups in double-stranded DNA using NAD as a coenzyme and as the energy source for the reaction. It is essential for DNA replication and repair of damaged DNA. In Desulfitobacterium hafniense (strain DSM 10664 / DCB-2), this protein is DNA ligase.